A 363-amino-acid chain; its full sequence is tRNA/tmRNA (uracil-C(5))-methyltransferase (363 aa).

S-adenosyl-L-methionine contacts are provided by Q187, Y215, N220, E236, and D296. C321 serves as the catalytic Nucleophile. E355 serves as the catalytic Proton acceptor.

The protein belongs to the class I-like SAM-binding methyltransferase superfamily. RNA M5U methyltransferase family. TrmA subfamily.

It carries out the reaction uridine(54) in tRNA + S-adenosyl-L-methionine = 5-methyluridine(54) in tRNA + S-adenosyl-L-homocysteine + H(+). The enzyme catalyses uridine(341) in tmRNA + S-adenosyl-L-methionine = 5-methyluridine(341) in tmRNA + S-adenosyl-L-homocysteine + H(+). Functionally, dual-specificity methyltransferase that catalyzes the formation of 5-methyluridine at position 54 (m5U54) in all tRNAs, and that of position 341 (m5U341) in tmRNA (transfer-mRNA). This is tRNA/tmRNA (uracil-C(5))-methyltransferase from Pseudomonas aeruginosa (strain LESB58).